A 241-amino-acid polypeptide reads, in one-letter code: Chaperone protein FimC (241 aa).

The N-terminal stretch at methionine 1–alanine 36 is a signal peptide.

It belongs to the periplasmic pilus chaperone family.

Its subcellular location is the periplasm. In terms of biological role, required for the biogenesis of type 1 fimbriae. Binds and interact with FimH. The chain is Chaperone protein FimC (fimC) from Escherichia coli O6:H1 (strain CFT073 / ATCC 700928 / UPEC).